Consider the following 414-residue polypeptide: DNA primase small subunit PriS (414 aa).

Active-site residues include Asp-98, Asp-100, and Asp-312.

This sequence belongs to the eukaryotic-type primase small subunit family. As to quaternary structure, heterodimer of a small subunit (PriS) and a large subunit (PriL). Requires Mg(2+) as cofactor. Mn(2+) is required as a cofactor.

Functionally, catalytic subunit of DNA primase, an RNA polymerase that catalyzes the synthesis of short RNA molecules used as primers for DNA polymerase during DNA replication. The small subunit contains the primase catalytic core and has DNA synthesis activity on its own. Binding to the large subunit stabilizes and modulates the activity, increasing the rate of DNA synthesis while decreasing the length of the DNA fragments, and conferring RNA synthesis capability. The DNA polymerase activity may enable DNA primase to also catalyze primer extension after primer synthesis. May also play a role in DNA repair. This Methanosarcina acetivorans (strain ATCC 35395 / DSM 2834 / JCM 12185 / C2A) protein is DNA primase small subunit PriS.